The chain runs to 98 residues: NADH-ubiquinone oxidoreductase chain 4L (98 aa).

The next 3 membrane-spanning stretches (helical) occupy residues 1 to 21 (MLSINLNLIVAFLLALMGVLI), 29 to 49 (TLLCLEGMMLSLFILMTLLIT), and 59 to 79 (TPLILLVFSACEAAIGLALLV).

Belongs to the complex I subunit 4L family. Core subunit of respiratory chain NADH dehydrogenase (Complex I) which is composed of 45 different subunits.

It is found in the mitochondrion inner membrane. The catalysed reaction is a ubiquinone + NADH + 5 H(+)(in) = a ubiquinol + NAD(+) + 4 H(+)(out). In terms of biological role, core subunit of the mitochondrial membrane respiratory chain NADH dehydrogenase (Complex I) which catalyzes electron transfer from NADH through the respiratory chain, using ubiquinone as an electron acceptor. Part of the enzyme membrane arm which is embedded in the lipid bilayer and involved in proton translocation. The sequence is that of NADH-ubiquinone oxidoreductase chain 4L (MT-ND4L) from Sminthopsis crassicaudata (Fat-tailed dunnart).